Consider the following 146-residue polypeptide: Phospholipase A2, membrane associated (146 aa).

Residues 1–21 (MKVLLLLAASIMAFGSIQVQG) form the signal peptide. 7 disulfides stabilise this stretch: Cys-47/Cys-139, Cys-49/Cys-65, Cys-64/Cys-119, Cys-70/Cys-146, Cys-71/Cys-112, Cys-80/Cys-105, and Cys-98/Cys-110. Ca(2+) is bound by residues His-48, Gly-50, and Gly-52. Residue His-68 is part of the active site. Asp-69 serves as a coordination point for Ca(2+). Residue Asp-113 is part of the active site.

Belongs to the phospholipase A2 family. Requires Ca(2+) as cofactor. As to expression, mainly in the Paneth cells adjacent to the stem population in the small intestines.

It localises to the secreted. The protein resides in the cell membrane. Its subcellular location is the mitochondrion outer membrane. It catalyses the reaction a 1,2-diacyl-sn-glycero-3-phosphoethanolamine + H2O = a 1-acyl-sn-glycero-3-phosphoethanolamine + a fatty acid + H(+). It carries out the reaction 1-hexadecanoyl-2-(9Z-octadecenoyl)-sn-glycero-3-phosphoethanolamine + H2O = 1-hexadecanoyl-sn-glycero-3-phosphoethanolamine + (9Z)-octadecenoate + H(+). The enzyme catalyses 1-hexadecanoyl-2-(9Z,12Z-octadecadienoyl)-sn-glycero-3-phosphoethanolamine + H2O = 1-hexadecanoyl-sn-glycero-3-phosphoethanolamine + (9Z,12Z)-octadecadienoate + H(+). The catalysed reaction is 1-hexadecanoyl-2-(5Z,8Z,11Z,14Z-eicosatetraenoyl)-sn-glycero-3-phosphoethanolamine + H2O = 1-hexadecanoyl-sn-glycero-3-phosphoethanolamine + (5Z,8Z,11Z,14Z)-eicosatetraenoate + H(+). It catalyses the reaction N-hexadecanoyl-1,2-di-(9Z-octadecenoyl)-sn-glycero-3-phosphoethanolamine + H2O = N-hexadecanoyl-1-(9Z-octadecenoyl)-sn-glycero-3-phosphoethanolamine + (9Z)-octadecenoate + H(+). It carries out the reaction 1,2-dihexadecanoyl-sn-glycero-3-phospho-(1'-sn-glycerol) + H2O = 1-hexadecanoyl-sn-glycero-3-phospho-(1'-sn-glycerol) + hexadecanoate + H(+). The enzyme catalyses 1-hexadecanoyl-2-(9Z-octadecenoyl)-sn-glycero-3-phosphoglycerol + H2O = 1-hexadecanoyl-sn-glycero-3-phosphoglycerol + (9Z)-octadecenoate + H(+). The catalysed reaction is 1-hexadecanoyl-2-(9Z-octadecenoyl)-sn-glycero-3-phospho-(1'-sn-glycerol) + H2O = 1-hexadecanoyl-sn-glycero-3-phospho-(1'-sn-glycerol) + (9Z)-octadecenoate + H(+). It catalyses the reaction a 1,2-diacyl-sn-glycero-3-phosphocholine + H2O = a 1-acyl-sn-glycero-3-phosphocholine + a fatty acid + H(+). It carries out the reaction 1,2-dihexadecanoyl-sn-glycero-3-phosphocholine + H2O = 1-hexadecanoyl-sn-glycero-3-phosphocholine + hexadecanoate + H(+). The enzyme catalyses 1-hexadecanoyl-2-(9Z-octadecenoyl)-sn-glycero-3-phosphocholine + H2O = 1-hexadecanoyl-sn-glycero-3-phosphocholine + (9Z)-octadecenoate + H(+). The catalysed reaction is 1-hexadecanoyl-2-(9Z,12Z-octadecadienoyl)-sn-glycero-3-phosphocholine + H2O = (9Z,12Z)-octadecadienoate + 1-hexadecanoyl-sn-glycero-3-phosphocholine + H(+). It catalyses the reaction 1-hexadecanoyl-2-(4Z,7Z,10Z,13Z,16Z,19Z-docosahexaenoyl)-sn-glycero-3-phosphocholine + H2O = (4Z,7Z,10Z,13Z,16Z,19Z)-docosahexaenoate + 1-hexadecanoyl-sn-glycero-3-phosphocholine + H(+). In terms of biological role, secretory calcium-dependent phospholipase A2 that primarily targets extracellular phospholipids with implications in host antimicrobial defense, inflammatory response and tissue regeneration. Hydrolyzes the ester bond of the fatty acyl group attached at sn-2 position of phospholipids (phospholipase A2 activity) with preference for phosphatidylethanolamines and phosphatidylglycerols over phosphatidylcholines. Contributes to lipid remodeling of cellular membranes and generation of lipid mediators involved in pathogen clearance. Displays bactericidal activity against Gram-positive bacteria by directly hydrolyzing phospholipids of the bacterial membrane. Upon sterile inflammation, targets membrane phospholipids of extracellular mitochondria released from activated platelets, generating free unsaturated fatty acids such as arachidonate that is used by neighboring leukocytes to synthesize inflammatory eicosanoids such as leukotrienes. Simultaneously, by compromising mitochondrial membrane integrity, promotes the release in circulation of potent damage-associated molecular pattern molecules that activate the innate immune response. Plays a stem cell regulator role in the intestinal crypt. Within intracellular compartment mediates Paneth cell differentiation and its stem cell supporting functions by inhibiting Wnt signaling pathway in intestinal stem cell (ICS). Secreted in the intestinal lumen upon inflammation, acts in an autocrine way and promotes prostaglandin E2 synthesis that stimulates Wnt signaling pathway in ICS cells and tissue regeneration. May play a role in the biosynthesis of N-acyl ethanolamines that regulate energy metabolism and inflammation. Hydrolyzes N-acyl phosphatidylethanolamines to N-acyl lysophosphatidylethanolamines, which are further cleaved by a lysophospholipase D to release N-acyl ethanolamines. Independent of its catalytic activity, acts as a ligand for integrins. Binds to and activates integrins ITGAV:ITGB3, ITGA4:ITGB1 and ITGA5:ITGB1. Binds to a site (site 2) which is distinct from the classical ligand-binding site (site 1) and induces integrin conformational changes and enhanced ligand binding to site 1. Induces cell proliferation in an integrin-dependent manner. The sequence is that of Phospholipase A2, membrane associated (Pla2g2a) from Mus musculus (Mouse).